We begin with the raw amino-acid sequence, 229 residues long: UPF0758 protein GSU0386 (229 aa).

Positions 107-229 (RFTSPEQVYN…FTSFVSAGLL (123 aa)) constitute an MPN domain. Zn(2+)-binding residues include His-178, His-180, and Asp-191. The JAMM motif motif lies at 178–191 (HNHPTGDPAPSRED).

The protein belongs to the UPF0758 family.

The polypeptide is UPF0758 protein GSU0386 (Geobacter sulfurreducens (strain ATCC 51573 / DSM 12127 / PCA)).